The sequence spans 179 residues: GTP-dependent dephospho-CoA kinase (179 aa).

Asp55, Val57, Asp74, Lys76, and Glu128 together coordinate GTP.

The protein belongs to the GTP-dependent DPCK family.

It carries out the reaction 3'-dephospho-CoA + GTP = GDP + CoA + H(+). Its pathway is cofactor biosynthesis; coenzyme A biosynthesis. Functionally, catalyzes the GTP-dependent phosphorylation of the 3'-hydroxyl group of dephosphocoenzyme A to form coenzyme A (CoA). The protein is GTP-dependent dephospho-CoA kinase of Saccharolobus solfataricus (strain ATCC 35092 / DSM 1617 / JCM 11322 / P2) (Sulfolobus solfataricus).